A 625-amino-acid chain; its full sequence is Sorting nexin-41 (625 aa).

Residues 1 to 90 form a disordered region; sequence MDYNIFEAVH…STSSHAVVEA (90 aa). Residues 54 to 86 show a composition bias toward low complexity; the sequence is SPPSSSSLPSSPAHSSSAGSSRASTSSSTSSHA. Positions 98–235 constitute a PX domain; that stretch reads VSLSMSTTAT…QKFLNPEFNW (138 aa). A 1,2-diacyl-sn-glycero-3-phospho-(1D-myo-inositol-3-phosphate) is bound by residues arginine 153, serine 155, lysine 179, and arginine 202. Coiled coils occupy residues 437-469 and 539-563; these read QFKI…NESL and QLTE…KDCL.

The protein belongs to the sorting nexin family. As to quaternary structure, binds to SNX4.

Its subcellular location is the prevacuolar compartment. The protein localises to the endosome. The protein resides in the endosome membrane. Functionally, involved in proper sorting of the v-SNARE protein SNC1. This chain is Sorting nexin-41 (SNX41), found in Saccharomyces cerevisiae (strain ATCC 204508 / S288c) (Baker's yeast).